Reading from the N-terminus, the 689-residue chain is Glycine--tRNA ligase beta subunit (689 aa).

Belongs to the class-II aminoacyl-tRNA synthetase family. As to quaternary structure, tetramer of two alpha and two beta subunits.

The protein resides in the cytoplasm. The enzyme catalyses tRNA(Gly) + glycine + ATP = glycyl-tRNA(Gly) + AMP + diphosphate. The polypeptide is Glycine--tRNA ligase beta subunit (Actinobacillus pleuropneumoniae serotype 3 (strain JL03)).